A 28-amino-acid chain; its full sequence is Omega-agatoxin-Aa2a (28 aa).

This sequence belongs to the neurotoxin 04 (omega-agtx) family. 03 (type II/III omega-agtx) subfamily. Expressed by the venom gland.

Its subcellular location is the secreted. Omega-agatoxin are antagonist of voltage-gated calcium channels. They block insect neuromuscular transmission presynaptically. Potent blocker of N-type calcium channels (Cav2.2/CACNA1B). The chain is Omega-agatoxin-Aa2a from Agelenopsis aperta (North American funnel-web spider).